A 172-amino-acid polypeptide reads, in one-letter code: Dual-action ribosomal maturation protein DarP (172 aa).

This sequence belongs to the DarP family.

It localises to the cytoplasm. Member of a network of 50S ribosomal subunit biogenesis factors which assembles along the 30S-50S interface, preventing incorrect 23S rRNA structures from forming. Promotes peptidyl transferase center (PTC) maturation. This is Dual-action ribosomal maturation protein DarP from Azotobacter vinelandii (strain DJ / ATCC BAA-1303).